The chain runs to 399 residues: UDP-galactopyranose mutase (399 aa).

FAD contacts are provided by residues serine 25, 44-45 (EK), asparagine 52, and 71-72 (HI). Residues serine 171, tryptophan 175, tyrosine 200, asparagine 297, arginine 306, and tyrosine 345 each coordinate UDP-alpha-D-galactose. Position 374 (arginine 374) interacts with FAD. Position 380 (tyrosine 380) interacts with UDP-alpha-D-galactose. Residue 381–386 (IDMDRA) coordinates FAD.

It belongs to the UDP-galactopyranose/dTDP-fucopyranose mutase family. Requires FAD as cofactor.

The enzyme catalyses UDP-alpha-D-galactose = UDP-alpha-D-galactofuranose. Involved in the conversion of UDP-GalP into UDP-GalF through a 2-keto intermediate. This Mycoplasma pneumoniae (strain ATCC 29342 / M129 / Subtype 1) (Mycoplasmoides pneumoniae) protein is UDP-galactopyranose mutase (glf).